The sequence spans 146 residues: Hemoglobin subunit beta (146 aa).

Positions 2-146 (QWTAEEKQLI…VAHALARKYH (145 aa)) constitute a Globin domain. Heme b contacts are provided by His63 and His92.

The protein belongs to the globin family. As to quaternary structure, heterotetramer of two alpha chains and two beta chains. In terms of tissue distribution, red blood cells.

Its function is as follows. Involved in oxygen transport from the lung to the various peripheral tissues. The protein is Hemoglobin subunit beta (HBB) of Passer montanus (Eurasian tree sparrow).